We begin with the raw amino-acid sequence, 407 residues long: Arylacetamide deacetylase-like 4 (407 aa).

The Cytoplasmic portion of the chain corresponds to 1–4 (MAVP). A helical; Signal-anchor for type II membrane protein transmembrane segment spans residues 5 to 25 (WLVLLLALPIFFLGVFVWAVF). The Lumenal segment spans residues 26–407 (EHFLTTDIPA…NAVVSYIKGI (382 aa)). The short motif at 119-121 (HGG) is the Involved in the stabilization of the negatively charged intermediate by the formation of the oxyanion hole element. An N-linked (GlcNAc...) asparagine glycan is attached at asparagine 168. Residue serine 193 is part of the active site. Asparagine 269 carries N-linked (GlcNAc...) asparagine glycosylation. Catalysis depends on residues aspartate 347 and histidine 377.

It belongs to the 'GDXG' lipolytic enzyme family.

It is found in the membrane. This Homo sapiens (Human) protein is Arylacetamide deacetylase-like 4 (AADACL4).